The chain runs to 326 residues: mRNA decay activator protein ZFP36 (326 aa).

The necessary for nuclear export stretch occupies residues 1–15 (MDLTAIYESLLSLSP). The interval 1-100 (MDLTAIYESL…PTSPTATSTT (100 aa)) is necessary and sufficient for the association with mRNA decay enzymes and mRNA decay activation. Necessary for localization of ARE-containing mRNAs to processing bodies (PBs) regions lie at residues 1-174 (MDLT…DLAA) and 100-326 (TPSR…SVSE). A disordered region spans residues 13 to 66 (LSPDVPVPSDHGGTESSPGWGSSGPWSLSPSDSSPSGVTSRLPGRSTSLVEGRS). The segment covering 28–49 (SSPGWGSSGPWSLSPSDSSPSG) has biased composition (low complexity). S60 bears the Phosphoserine; by MAPKAPK2 mark. S66 bears the Phosphoserine mark. Residues 71 to 75 (PPPPG) form a P-P-P-P-G repeat. The tract at residues 78–102 (PLAPRLGPELSPSPTSPTATSTTPS) is disordered. Phosphoserine occurs at positions 88 and 90. T92 is subject to Phosphothreonine. A Phosphoserine modification is found at S93. A necessary for nuclear localization region spans residues 95-168 (TATSTTPSRY…GSRCHFIHNP (74 aa)). Positions 97–173 (TSTTPSRYKT…FIHNPSEDLA (77 aa)) are necessary for RNA-binding. C3H1-type zinc fingers lie at residues 103–131 (RYKT…HGLG) and 141–169 (KYKT…HNPS). Positions 103-194 (RYKTELCRTF…ISFSGLPSGR (92 aa)) are necessary for interaction with PABPN1. S169 is subject to Phosphoserine. The interval 174 to 326 (APGHPPVLRQ…PIFNRISVSE (153 aa)) is necessary for mRNA decay activation. Disordered stretches follow at residues 175–245 (PGHP…RRDP) and 273–292 (SVQS…SSLG). S186 is modified (phosphoserine; by MAPKAPK2). S197 bears the Phosphoserine mark. A P-P-P-P-G repeat occupies 198-202 (PPPPG). Residues 204 to 216 (AGPSLSSSSFSPS) show a composition bias toward low complexity. S218 carries the phosphoserine modification. A P-P-P-P-G repeat occupies 219–223 (PPPPG). S228 carries the phosphoserine; by MAPK1; in vitro modification. 3 positions are modified to phosphoserine: S276, S296, and S323. The segment at 312-326 (APRRLPIFNRISVSE) is interaction with CNOT1.

In terms of assembly, associates with cytoplasmic CCR4-NOT and PAN2-PAN3 deadenylase complexes to trigger ARE-containing mRNA deadenylation and decay processes. Part of a mRNA decay activation complex at least composed of poly(A)-specific exoribonucleases CNOT6, EXOSC2 and XRN1 and mRNA-decapping enzymes DCP1A and DCP2. Associates with the RNA exosome complex. Interacts (via phosphorylated form) with 14-3-3 proteins; these interactions promote exclusion of ZFP36 from cytoplasmic stress granules in response to arsenite treatment in a MAPKAPK2-dependent manner and does not prevent CCR4-NOT deadenylase complex recruitment or ZFP36-induced ARE-containing mRNA deadenylation and decay processes. Interacts with 14-3-3 proteins; these interactions occur in response to rapamycin in an Akt-dependent manner. Interacts with AGO2 and AGO4. Interacts (via C-terminus) with CNOT1; this interaction occurs in a RNA-independent manner and induces mRNA deadenylation. Interacts (via N-terminus) with CNOT6. Interacts with CNOT6L. Interacts (via C-terminus) with CNOT7; this interaction occurs in a RNA-independent manner, induces mRNA deadenylation and is inhibited in a phosphorylation MAPKAPK2-dependent manner. Interacts (via unphosphorylated form) with CNOT8; this interaction occurs in a RNA-independent manner and is inhibited in a phosphorylation MAPKAPK2-dependent manner. Interacts with DCP1A. Interacts (via N-terminus) with DCP2. Interacts with EDC3. Interacts (via N-terminus) with EXOSC2. Interacts with heat shock 70 kDa proteins. Interacts with KHSRP; this interaction increases upon cytokine-induced treatment. Interacts with MAP3K4; this interaction enhances the association with SH3KBP1/CIN85. Interacts with MAPKAPK2; this interaction occurs upon skeletal muscle satellite cell activation. Interacts with NCL. Interacts with NUP214; this interaction increases upon lipopolysaccharide (LPS) stimulation. Interacts with PABPC1; this interaction occurs in a RNA-dependent manner. Interacts (via hypophosphorylated form) with PABPN1 (via RRM domain and C-terminal arginine-rich region); this interaction occurs in the nucleus in a RNA-independent manner, decreases in presence of single-stranded poly(A) RNA-oligomer and in a p38 MAPK-dependent-manner and inhibits nuclear poly(A) tail synthesis. Interacts with PAN2. Interacts (via C3H1-type zinc finger domains) with PKM. Interacts (via C3H1-type zinc finger domains) with nuclear RNA poly(A) polymerase. Interacts with PPP2CA; this interaction occurs in LPS-stimulated cells and induces ZFP36 dephosphorylation, and hence may promote ARE-containing mRNAs decay. Interacts (via C-terminus) with PRR5L (via C-terminus); this interaction may accelerate ZFP36-mediated mRNA decay during stress. Interacts (via C-terminus) with SFN; this interaction occurs in a phosphorylation-dependent manner. Interacts (via extreme C-terminal region) with SH3KBP1/CIN85 (via SH3 domains); this interaction enhances MAP3K4-induced phosphorylation of ZFP36 at Ser-66 and Ser-93 and does not alter neither ZFP36 binding to ARE-containing transcripts nor TNF-alpha mRNA decay. Interacts with XRN1. Interacts (via C-terminus and Ser-186 phosphorylated form) with YWHAB; this interaction occurs in a p38/MAPKAPK2-dependent manner, increases cytoplasmic localization of ZFP36 and protects ZFP36 from Ser-186 dephosphorylation by serine/threonine phosphatase 2A, and hence may be crucial for stabilizing ARE-containing mRNAs. Interacts (via phosphorylated form) with YWHAE. Interacts (via C-terminus) with YWHAG; this interaction occurs in a phosphorylation-dependent manner. Interacts with YWHAH; this interaction occurs in a phosphorylation-dependent manner. Interacts with YWHAQ; this interaction occurs in a phosphorylation-dependent manner. Interacts with (via C-terminus) YWHAZ; this interaction occurs in a phosphorylation-dependent manner. Interacts (via P-P-P-P-G repeats) with GIGYF2; the interaction is direct. (Microbial infection) Interacts (via C-terminus) with HTLV-1 TAX (via C-terminus); this interaction inhibits HTLV-1 TAX to transactivate viral long terminal repeat (LTR) promoter. Phosphorylated. Phosphorylation at serine and/or threonine residues occurs in a p38 MAPK- and MAPKAPK2-dependent manner. Phosphorylated by MAPKAPK2 at Ser-60 and Ser-186; phosphorylation increases its stability and cytoplasmic localization, promotes binding to 14-3-3 adapter proteins and inhibits the recruitment of cytoplasmic CCR4-NOT and PAN2-PAN3 deadenylase complexes to the mRNA decay machinery, thereby inhibiting ZFP36-induced ARE-containing mRNA deadenylation and decay processes. Phosphorylation by MAPKAPK2 does not impair ARE-containing RNA-binding. Phosphorylated in a MAPKAPK2- and p38 MAPK-dependent manner upon skeletal muscle satellite cell activation; this phosphorylation inhibits ZFP36-mediated mRNA decay activity, and hence stabilizes MYOD1 mRNA. Phosphorylated by MAPK1 upon mitogen stimulation. Phosphorylated at Ser-66 and Ser-93; these phosphorylations increase in a SH3KBP1-dependent manner. Phosphorylated at serine and threonine residues in a pyruvate kinase PKM- and p38 MAPK-dependent manner. Phosphorylation at Ser-60 may participate in the PKM-mediated degradation of ZFP36 in a p38 MAPK-dependent manner. Dephosphorylated by serine/threonine phosphatase 2A at Ser-186. In terms of processing, ubiquitinated; pyruvate kinase (PKM)-dependent ubiquitination leads to proteasomal degradation through a p38 MAPK signaling pathway. In terms of tissue distribution, expressed in both basal and suprabasal epidermal layers. Expressed in epidermal keratinocytes. Expressed strongly in mature dendritic cells. Expressed in immature dendritic cells (at protein level).

The protein resides in the nucleus. It is found in the cytoplasm. The protein localises to the cytoplasmic granule. It localises to the P-body. In terms of biological role, zinc-finger RNA-binding protein that destabilizes several cytoplasmic AU-rich element (ARE)-containing mRNA transcripts by promoting their poly(A) tail removal or deadenylation, and hence provide a mechanism for attenuating protein synthesis. Acts as an 3'-untranslated region (UTR) ARE mRNA-binding adapter protein to communicate signaling events to the mRNA decay machinery. Recruits deadenylase CNOT7 (and probably the CCR4-NOT complex) via association with CNOT1, and hence promotes ARE-mediated mRNA deadenylation. Functions also by recruiting components of the cytoplasmic RNA decay machinery to the bound ARE-containing mRNAs. Self regulates by destabilizing its own mRNA. Binds to 3'-UTR ARE of numerous mRNAs and of its own mRNA. Plays a role in anti-inflammatory responses; suppresses tumor necrosis factor (TNF)-alpha production by stimulating ARE-mediated TNF-alpha mRNA decay and several other inflammatory ARE-containing mRNAs in interferon (IFN)- and/or lipopolysaccharide (LPS)-induced macrophages. Also plays a role in the regulation of dendritic cell maturation at the post-transcriptional level, and hence operates as part of a negative feedback loop to limit the inflammatory response. Promotes ARE-mediated mRNA decay of hypoxia-inducible factor HIF1A mRNA during the response of endothelial cells to hypoxia. Positively regulates early adipogenesis of preadipocytes by promoting ARE-mediated mRNA decay of immediate early genes (IEGs). Negatively regulates hematopoietic/erythroid cell differentiation by promoting ARE-mediated mRNA decay of the transcription factor STAT5B mRNA. Plays a role in maintaining skeletal muscle satellite cell quiescence by promoting ARE-mediated mRNA decay of the myogenic determination factor MYOD1 mRNA. Associates also with and regulates the expression of non-ARE-containing target mRNAs at the post-transcriptional level, such as MHC class I mRNAs. Participates in association with argonaute RISC catalytic components in the ARE-mediated mRNA decay mechanism; assists microRNA (miRNA) targeting ARE-containing mRNAs. May also play a role in the regulation of cytoplasmic mRNA decapping; enhances decapping of ARE-containing RNAs, in vitro. Involved in the delivery of target ARE-mRNAs to processing bodies (PBs). In addition to its cytosolic mRNA-decay function, affects nuclear pre-mRNA processing. Negatively regulates nuclear poly(A)-binding protein PABPN1-stimulated polyadenylation activity on ARE-containing pre-mRNA during LPS-stimulated macrophages. Also involved in the regulation of stress granule (SG) and P-body (PB) formation and fusion. Plays a role in the regulation of keratinocyte proliferation, differentiation and apoptosis. Plays a role as a tumor suppressor by inhibiting cell proliferation in breast cancer cells. (Microbial infection) Negatively regulates HTLV-1 TAX-dependent transactivation of viral long terminal repeat (LTR) promoter. This chain is mRNA decay activator protein ZFP36, found in Homo sapiens (Human).